The chain runs to 522 residues: Zinc finger protein C25B8.19c (522 aa).

Disordered stretches follow at residues 1-25 (MSSD…LPTT), 61-96 (DPQA…SNSN), 235-265 (QRQS…QEVT), 311-386 (QPSS…HTLS), and 413-462 (NSAQ…STSS). Low complexity predominate over residues 84–96 (AGNTNTPTTSNSN). Polar residues-rich tracts occupy residues 311 to 321 (QPSSRDLQNHP) and 335 to 344 (ASNTLNHANG). Low complexity predominate over residues 345–362 (NQAENASESSTSQSNDSQ). Positions 413 to 427 (NSAQAHPMGQQSDSN) are enriched in polar residues. Over residues 428–438 (YSDHHNNDKRA) the composition is skewed to basic and acidic residues. Residues 453–462 (SHTGSSSTSS) are compositionally biased toward low complexity. 2 consecutive C2H2-type zinc fingers follow at residues 468–495 (YRCT…GERP) and 496–522 (FVCD…IHGL).

Its subcellular location is the nucleus. The polypeptide is Zinc finger protein C25B8.19c (Schizosaccharomyces pombe (strain 972 / ATCC 24843) (Fission yeast)).